We begin with the raw amino-acid sequence, 314 residues long: MQIKLANPRGFCAGVDRAIEIVNRALEVFGPPIYVRHEVVHNKFVVEDLRIRGAIFVEELDQVPDDVIVIFSAHGVSQAVRTEAAGRGLKVFDATCPLVTKVHIEVAKYSRDGRECILIGHAGHPEVEGTMGQYDASNGGAIYLVEDEKDVAELQVHNPDKLAFVTQTTLSMDDTSRVIDALRTRFPAIGGPRKDDICYATQNRQDAVKQLADECDVVLVVGSPNSSNSNRLRELAERMATPAYLIDGAEDLQKSWFDGVERIGITAGASAPEVLVRGVIQQLQAWGATGADELAGREENITFSMPKELRVRSI.

[4Fe-4S] cluster is bound at residue cysteine 12. (2E)-4-hydroxy-3-methylbut-2-enyl diphosphate is bound by residues histidine 41 and histidine 74. Dimethylallyl diphosphate contacts are provided by histidine 41 and histidine 74. Isopentenyl diphosphate contacts are provided by histidine 41 and histidine 74. Cysteine 96 is a binding site for [4Fe-4S] cluster. Histidine 124 provides a ligand contact to (2E)-4-hydroxy-3-methylbut-2-enyl diphosphate. Histidine 124 lines the dimethylallyl diphosphate pocket. Isopentenyl diphosphate is bound at residue histidine 124. The active-site Proton donor is glutamate 126. Threonine 168 contributes to the (2E)-4-hydroxy-3-methylbut-2-enyl diphosphate binding site. Position 198 (cysteine 198) interacts with [4Fe-4S] cluster. (2E)-4-hydroxy-3-methylbut-2-enyl diphosphate contacts are provided by serine 226, serine 227, asparagine 228, and serine 270. Dimethylallyl diphosphate is bound by residues serine 226, serine 227, asparagine 228, and serine 270. Residues serine 226, serine 227, asparagine 228, and serine 270 each coordinate isopentenyl diphosphate.

This sequence belongs to the IspH family. It depends on [4Fe-4S] cluster as a cofactor.

The enzyme catalyses isopentenyl diphosphate + 2 oxidized [2Fe-2S]-[ferredoxin] + H2O = (2E)-4-hydroxy-3-methylbut-2-enyl diphosphate + 2 reduced [2Fe-2S]-[ferredoxin] + 2 H(+). It carries out the reaction dimethylallyl diphosphate + 2 oxidized [2Fe-2S]-[ferredoxin] + H2O = (2E)-4-hydroxy-3-methylbut-2-enyl diphosphate + 2 reduced [2Fe-2S]-[ferredoxin] + 2 H(+). The protein operates within isoprenoid biosynthesis; dimethylallyl diphosphate biosynthesis; dimethylallyl diphosphate from (2E)-4-hydroxy-3-methylbutenyl diphosphate: step 1/1. It participates in isoprenoid biosynthesis; isopentenyl diphosphate biosynthesis via DXP pathway; isopentenyl diphosphate from 1-deoxy-D-xylulose 5-phosphate: step 6/6. In terms of biological role, catalyzes the conversion of 1-hydroxy-2-methyl-2-(E)-butenyl 4-diphosphate (HMBPP) into a mixture of isopentenyl diphosphate (IPP) and dimethylallyl diphosphate (DMAPP). Acts in the terminal step of the DOXP/MEP pathway for isoprenoid precursor biosynthesis. This is 4-hydroxy-3-methylbut-2-enyl diphosphate reductase from Pseudomonas fluorescens (strain Pf0-1).